Consider the following 213-residue polypeptide: Large ribosomal subunit protein eL14 (213 aa).

Lys79 bears the N6-acetyllysine mark. An N6-acetyllysine; alternate modification is found at Lys85. Lys85 is subject to N6-succinyllysine; alternate. Residue Lys124 forms a Glycyl lysine isopeptide (Lys-Gly) (interchain with G-Cter in SUMO2) linkage. Position 139 is a phosphoserine (Ser139). Residues 166 to 213 (TAGKKAPAQKAPAQKAAGQKAAPPPKAQKVQKPPAQKAPAPKASGEKA) form a disordered region. The stretch at 169–173 (KKAPA) is one 1-1; approximate repeat. The segment at 169-188 (KKAPAQKAPAQKAAGQKAAP) is 4 X 5 AA tandem repeats of Q-K-A-[APS]-X. Repeat copies occupy residues 174–178 (QKAPA), 179–183 (QKAAG), 184–188 (QKAAP), 191–193 (KAQ), and 194–196 (KVQ). Positions 191–196 (KAQKVQ) are 2 X 3 AA tandem repeats of K-G-Q. N6-succinyllysine is present on Lys202.

This sequence belongs to the eukaryotic ribosomal protein eL14 family. As to quaternary structure, component of the large ribosomal subunit.

It is found in the cytoplasm. Functionally, component of the large ribosomal subunit. The ribosome is a large ribonucleoprotein complex responsible for the synthesis of proteins in the cell. The protein is Large ribosomal subunit protein eL14 (RPL14) of Sus scrofa (Pig).